The primary structure comprises 88 residues: Small ribosomal subunit protein bS20 (88 aa).

Residues 1–23 (MANSPQAKKRARQNDKARAHNAS) are disordered.

It belongs to the bacterial ribosomal protein bS20 family.

Functionally, binds directly to 16S ribosomal RNA. The polypeptide is Small ribosomal subunit protein bS20 (Saccharophagus degradans (strain 2-40 / ATCC 43961 / DSM 17024)).